A 177-amino-acid chain; its full sequence is Transcription termination/antitermination protein NusG (177 aa).

Residues 126 to 156 enclose the KOW domain; sequence PGETVRVIDGPFADFNGVVEEVNYEKSRIQV.

Belongs to the NusG family.

Functionally, participates in transcription elongation, termination and antitermination. The polypeptide is Transcription termination/antitermination protein NusG (Pseudomonas aeruginosa (strain ATCC 15692 / DSM 22644 / CIP 104116 / JCM 14847 / LMG 12228 / 1C / PRS 101 / PAO1)).